A 392-amino-acid polypeptide reads, in one-letter code: Formate-dependent phosphoribosylglycinamide formyltransferase (392 aa).

N(1)-(5-phospho-beta-D-ribosyl)glycinamide-binding positions include 22 to 23 (EL) and E82. ATP-binding positions include R114, K155, 160 to 165 (SSGKGQ), 195 to 198 (EGVV), and E203. Residues 119–308 (RLAAEELGLP…EFALHVRAFL (190 aa)) form the ATP-grasp domain. Mg(2+)-binding residues include E267 and E279. N(1)-(5-phospho-beta-D-ribosyl)glycinamide contacts are provided by residues D286, K355, and 362 to 363 (RR).

Belongs to the PurK/PurT family. Homodimer.

It carries out the reaction N(1)-(5-phospho-beta-D-ribosyl)glycinamide + formate + ATP = N(2)-formyl-N(1)-(5-phospho-beta-D-ribosyl)glycinamide + ADP + phosphate + H(+). It participates in purine metabolism; IMP biosynthesis via de novo pathway; N(2)-formyl-N(1)-(5-phospho-D-ribosyl)glycinamide from N(1)-(5-phospho-D-ribosyl)glycinamide (formate route): step 1/1. Functionally, involved in the de novo purine biosynthesis. Catalyzes the transfer of formate to 5-phospho-ribosyl-glycinamide (GAR), producing 5-phospho-ribosyl-N-formylglycinamide (FGAR). Formate is provided by PurU via hydrolysis of 10-formyl-tetrahydrofolate. This Salmonella schwarzengrund (strain CVM19633) protein is Formate-dependent phosphoribosylglycinamide formyltransferase.